The primary structure comprises 103 residues: Large ribosomal subunit protein bL21 (103 aa).

This sequence belongs to the bacterial ribosomal protein bL21 family. As to quaternary structure, part of the 50S ribosomal subunit. Contacts protein L20.

Functionally, this protein binds to 23S rRNA in the presence of protein L20. The protein is Large ribosomal subunit protein bL21 of Aliivibrio fischeri (strain ATCC 700601 / ES114) (Vibrio fischeri).